A 348-amino-acid chain; its full sequence is Spermidine/putrescine import ATP-binding protein PotA (348 aa).

The ABC transporter domain maps to 6 to 236; it reads IRLVNVTKEY…PKNVFVADFI (231 aa). Position 38–45 (38–45) interacts with ATP; the sequence is GPSGCGKT.

This sequence belongs to the ABC transporter superfamily. Spermidine/putrescine importer (TC 3.A.1.11.1) family. The complex is composed of two ATP-binding proteins (PotA), two transmembrane proteins (PotB and PotC) and a solute-binding protein (PotD).

The protein resides in the cell membrane. The catalysed reaction is ATP + H2O + polyamine-[polyamine-binding protein]Side 1 = ADP + phosphate + polyamineSide 2 + [polyamine-binding protein]Side 1.. Functionally, part of the ABC transporter complex PotABCD involved in spermidine/putrescine import. Responsible for energy coupling to the transport system. The sequence is that of Spermidine/putrescine import ATP-binding protein PotA from Desulfitobacterium hafniense (strain Y51).